Consider the following 581-residue polypeptide: Arginine--tRNA ligase (581 aa).

The 'HIGH' region signature appears at 126–136 (PNLAKEMHVGH).

It belongs to the class-I aminoacyl-tRNA synthetase family. In terms of assembly, monomer.

It is found in the cytoplasm. It catalyses the reaction tRNA(Arg) + L-arginine + ATP = L-arginyl-tRNA(Arg) + AMP + diphosphate. In Shewanella baltica (strain OS155 / ATCC BAA-1091), this protein is Arginine--tRNA ligase.